Consider the following 433-residue polypeptide: Epi-neemfruitin B synthase L1AT (433 aa).

Residues His151 and Asp372 each act as proton acceptor in the active site.

The protein belongs to the plant acyltransferase family. In terms of assembly, monomer. As to expression, mainly expressed in petioles and, to a lower extent, in roots.

It carries out the reaction (21S)-21-acetyl-1-hydroxy-apo-melianone + acetyl-CoA = epi-neemfruitin B + acetate + CoA + H(+). Its pathway is secondary metabolite biosynthesis; terpenoid biosynthesis. In terms of biological role, acetyltransferase involved in the biosynthesis of limonoids triterpene natural products such as azadirachtin, an antifeedant widely used as bioinsecticide, and possessing many medicinal applications including anti-tumoral, anti-malarial, anti-rheumatic, antibacterial, anti-inflammatory, anti-pyretic and diuretic effects. Catalyzes the formation of epi-neemfruitin B from (21S)-21-acetyl-1-hydroxy-apo-melianone. The sequence is that of Epi-neemfruitin B synthase L1AT from Melia azedarach (Chinaberry tree).